The following is a 233-amino-acid chain: Large ribosomal subunit protein uL1 (233 aa).

This sequence belongs to the universal ribosomal protein uL1 family. In terms of assembly, part of the 50S ribosomal subunit.

Its function is as follows. Binds directly to 23S rRNA. The L1 stalk is quite mobile in the ribosome, and is involved in E site tRNA release. Protein L1 is also a translational repressor protein, it controls the translation of the L11 operon by binding to its mRNA. The sequence is that of Large ribosomal subunit protein uL1 from Geobacillus sp. (strain WCH70).